A 114-amino-acid polypeptide reads, in one-letter code: MIDDMAVPLTFTDAAANKVKSLISEEENTNLKLRVYITGGGCSGFQYGFTFDEKVNDGDLTIEKSGVQLVIDPMSLQYLIGGTVDYTEGLEGSRFTVNNPNATSTCGCGSSFSI.

Positions 42, 106, and 108 each coordinate iron-sulfur cluster.

The protein belongs to the HesB/IscA family. In terms of assembly, homodimer. Iron-sulfur cluster is required as a cofactor.

Required for insertion of 4Fe-4S clusters for at least IspG. The chain is Iron-sulfur cluster insertion protein ErpA from Haemophilus influenzae (strain PittGG).